Here is a 323-residue protein sequence, read N- to C-terminus: Iron-sulfur cluster transfer protein NUBPL (323 aa).

Residue 65 to 72 (AKGGVGKS) coordinates ATP.

Belongs to the Mrp/NBP35 ATP-binding proteins family. It depends on [4Fe-4S] cluster as a cofactor.

The protein resides in the mitochondrion. Its function is as follows. Iron-sulfur cluster transfer protein involved in the assembly of the mitochondrial membrane respiratory chain NADH dehydrogenase (Complex I). May deliver one or more Fe-S clusters to complex I subunits. In Dictyostelium discoideum (Social amoeba), this protein is Iron-sulfur cluster transfer protein NUBPL (nubpl).